A 274-amino-acid polypeptide reads, in one-letter code: Caldesmon, smooth muscle (274 aa).

2 disordered regions span residues 1-102 (SNLK…FSPK) and 179-274 (KGNV…EKEP). Composition is skewed to basic and acidic residues over residues 12–21 (GSEKLKEKQQ) and 28–95 (DELK…EKKP). Over residues 182 to 194 (VFSSPGGTGTPNK) the composition is skewed to polar residues. 2 stretches are compositionally biased toward basic and acidic residues: residues 226 to 245 (SDLR…KQSV) and 260 to 274 (KKSE…EKEP).

Its subcellular location is the cytoplasm. It is found in the cytoskeleton. It localises to the myofibril. The protein localises to the stress fiber. Its function is as follows. Control of actomyosin interactions in smooth muscle and nonmuscle cells (could act as a bridge between myosin and actin filaments). Inhibits the actin-activated ATPase of myosin this inhibition is attenuated by calcium-calmodulin and is potentiated by tropomyosin. Interacts with actin, myosin, 2 molecules of tropomyosin and with calmodulin. This is Caldesmon, smooth muscle (CALD1) from Meleagris gallopavo (Wild turkey).